A 561-amino-acid chain; its full sequence is Arginine--tRNA ligase (561 aa).

Residues 136–146 (ANPTGLLHMGN) carry the 'HIGH' region motif.

The protein belongs to the class-I aminoacyl-tRNA synthetase family. In terms of assembly, monomer.

It is found in the cytoplasm. It carries out the reaction tRNA(Arg) + L-arginine + ATP = L-arginyl-tRNA(Arg) + AMP + diphosphate. This is Arginine--tRNA ligase from Desulforamulus reducens (strain ATCC BAA-1160 / DSM 100696 / MI-1) (Desulfotomaculum reducens).